We begin with the raw amino-acid sequence, 391 residues long: MTLQPASGARDLNPQQVRKNHLIASKLSSLYQLWGYERISPPHIERLDTLTAAGGISNNEILKIVSDEPLGLRPEITASIVRAASTRFNEYERPLRFWSAGTSFKCNQSIDGGIDIEESFQSGVELIGTKAINAEIELLSLLIESLEVIEIDQKYKMTLLIGNTYLLELILSSFDSTKIDQIKKILSDLDYIALTTLDVKEEQRMFIKTIMNMRGKPEKVLTNLQNIYGSNSYIDKLEELFTIIEPLAKEKGIEVQLDPTLGTKYKLYSGLTFSLVSSSTSAPVTIAKGGRYDDLVKKFSSSAQNCYGIGFSISVDKVRELVSTSKEKLVNNVKVLIAYKQSANLYKALKQQKELHRKGIISVISHEPLKTIDETNQLLKTNRCNKIEWID.

It belongs to the class-II aminoacyl-tRNA synthetase family. HisZ subfamily. Heteromultimer composed of HisG and HisZ subunits.

The protein localises to the cytoplasm. It participates in amino-acid biosynthesis; L-histidine biosynthesis; L-histidine from 5-phospho-alpha-D-ribose 1-diphosphate: step 1/9. Its function is as follows. Required for the first step of histidine biosynthesis. May allow the feedback regulation of ATP phosphoribosyltransferase activity by histidine. This is ATP phosphoribosyltransferase regulatory subunit from Prochlorococcus marinus (strain NATL2A).